Here is a 251-residue protein sequence, read N- to C-terminus: Hydroxyacylglutathione hydrolase (251 aa).

7 residues coordinate Zn(2+): H58, H60, D62, H63, H116, D135, and H173.

The protein belongs to the metallo-beta-lactamase superfamily. Glyoxalase II family. In terms of assembly, monomer. The cofactor is Zn(2+).

The catalysed reaction is an S-(2-hydroxyacyl)glutathione + H2O = a 2-hydroxy carboxylate + glutathione + H(+). It participates in secondary metabolite metabolism; methylglyoxal degradation; (R)-lactate from methylglyoxal: step 2/2. Its function is as follows. Thiolesterase that catalyzes the hydrolysis of S-D-lactoyl-glutathione to form glutathione and D-lactic acid. The sequence is that of Hydroxyacylglutathione hydrolase from Bdellovibrio bacteriovorus (strain ATCC 15356 / DSM 50701 / NCIMB 9529 / HD100).